A 103-amino-acid polypeptide reads, in one-letter code: Signal recognition particle 19 kDa protein (103 aa).

The protein belongs to the SRP19 family. As to quaternary structure, part of the signal recognition particle protein translocation system, which is composed of SRP and FtsY. Archaeal SRP consists of a 7S RNA molecule of 300 nucleotides and two protein subunits: SRP54 and SRP19.

The protein resides in the cytoplasm. In terms of biological role, involved in targeting and insertion of nascent membrane proteins into the cytoplasmic membrane. Binds directly to 7S RNA and mediates binding of the 54 kDa subunit of the SRP. The sequence is that of Signal recognition particle 19 kDa protein from Hyperthermus butylicus (strain DSM 5456 / JCM 9403 / PLM1-5).